Reading from the N-terminus, the 432-residue chain is Methylenetetrahydrofolate--tRNA-(uracil-5-)-methyltransferase TrmFO (432 aa).

An FAD-binding site is contributed by 7-12; sequence GAGLAG.

This sequence belongs to the MnmG family. TrmFO subfamily. The cofactor is FAD.

The protein resides in the cytoplasm. The catalysed reaction is uridine(54) in tRNA + (6R)-5,10-methylene-5,6,7,8-tetrahydrofolate + NADH + H(+) = 5-methyluridine(54) in tRNA + (6S)-5,6,7,8-tetrahydrofolate + NAD(+). It carries out the reaction uridine(54) in tRNA + (6R)-5,10-methylene-5,6,7,8-tetrahydrofolate + NADPH + H(+) = 5-methyluridine(54) in tRNA + (6S)-5,6,7,8-tetrahydrofolate + NADP(+). Catalyzes the folate-dependent formation of 5-methyl-uridine at position 54 (M-5-U54) in all tRNAs. This Anoxybacillus flavithermus (strain DSM 21510 / WK1) protein is Methylenetetrahydrofolate--tRNA-(uracil-5-)-methyltransferase TrmFO.